Reading from the N-terminus, the 634-residue chain is Polyadenylate-binding protein 1A (634 aa).

4 consecutive RRM domains span residues 11-89 (ASLY…WSQR), 99-175 (GNIF…RFKS), 191-268 (TNVY…RAQK), and 294-370 (VNLY…LAQR). Positions 541–618 (QEPLTASMLA…AVAVLQAHQA (78 aa)) constitute a PABC domain.

It belongs to the polyadenylate-binding protein type-1 family. As to quaternary structure, interacts with ybx1; interaction recruits pabpc1a on C5-methylcytosine (m5C)-containing mRNAs, preventing their degradation.

The protein localises to the cytoplasm. Binds the poly(A) tail of mRNA. Prevents mRNA deadenylation and confers poly(A) stability. Binds to N6-methyladenosine (m6A)-containing mRNAs. Stimulates the translation of mRNAs to which it is bound, acting, at least in part, with dazl. Involved in the maternal-to-zygotic transition in early embryo via interaction with ybx1: interaction recruits pabpc1a on C5-methylcytosine (m5C)-containing maternal mRNAs, preventing their degradation. This is Polyadenylate-binding protein 1A from Danio rerio (Zebrafish).